We begin with the raw amino-acid sequence, 237 residues long: Methylthioribulose-1-phosphate dehydratase (237 aa).

Cys97 lines the substrate pocket. Residues His114 and His116 each contribute to the Zn(2+) site. Glu143 functions as the Proton donor/acceptor in the catalytic mechanism. Residue His199 coordinates Zn(2+).

It belongs to the aldolase class II family. MtnB subfamily. Zn(2+) is required as a cofactor.

The protein resides in the cytoplasm. It carries out the reaction 5-(methylsulfanyl)-D-ribulose 1-phosphate = 5-methylsulfanyl-2,3-dioxopentyl phosphate + H2O. Its pathway is amino-acid biosynthesis; L-methionine biosynthesis via salvage pathway; L-methionine from S-methyl-5-thio-alpha-D-ribose 1-phosphate: step 2/6. Functionally, catalyzes the dehydration of methylthioribulose-1-phosphate (MTRu-1-P) into 2,3-diketo-5-methylthiopentyl-1-phosphate (DK-MTP-1-P). This chain is Methylthioribulose-1-phosphate dehydratase, found in Coccidioides posadasii (strain C735) (Valley fever fungus).